Consider the following 46-residue polypeptide: Replication-associated protein (46 aa).

Its function is as follows. Seems to play a role in virus replication. This is Replication-associated protein from Solanum tuberosum (Potato).